The sequence spans 76 residues: UPF0352 protein PC1_1633 (76 aa).

Belongs to the UPF0352 family.

The polypeptide is UPF0352 protein PC1_1633 (Pectobacterium carotovorum subsp. carotovorum (strain PC1)).